The primary structure comprises 320 residues: Ferrochelatase (320 aa).

Residues His-194 and Glu-275 each contribute to the Fe cation site.

It belongs to the ferrochelatase family.

Its subcellular location is the cytoplasm. The enzyme catalyses heme b + 2 H(+) = protoporphyrin IX + Fe(2+). The protein operates within porphyrin-containing compound metabolism; protoheme biosynthesis; protoheme from protoporphyrin-IX: step 1/1. Its function is as follows. Catalyzes the ferrous insertion into protoporphyrin IX. The chain is Ferrochelatase from Vibrio parahaemolyticus serotype O3:K6 (strain RIMD 2210633).